The sequence spans 366 residues: Galactoside alpha-(1,2)-fucosyltransferase 1 (366 aa).

The Cytoplasmic portion of the chain corresponds to 1-8 (MWPPSHRQ). A helical; Signal-anchor for type II membrane protein membrane pass occupies residues 9–25 (LCLAFLLVCVLSVISFF). At 26 to 366 (LHIHQDSFPH…LSSLWTLAKP (341 aa)) the chain is on the lumenal side. N-linked (GlcNAc...) asparagine glycosylation is found at asparagine 66, asparagine 302, and asparagine 328.

Belongs to the glycosyltransferase 11 family.

The protein resides in the golgi apparatus. Its subcellular location is the golgi stack membrane. It catalyses the reaction a beta-D-galactosyl-(1-&gt;4)-N-acetyl-beta-D-glucosaminyl derivative + GDP-beta-L-fucose = an alpha-L-Fuc-(1-&gt;2)-beta-D-Gal-(1-&gt;4)-beta-D-GlcNAc derivative + GDP + H(+). The catalysed reaction is a ganglioside GA1 + GDP-beta-L-fucose = a ganglioside Fuc-GA1 + GDP + H(+). The enzyme catalyses a beta-D-Gal-(1-&gt;3)-beta-D-GlcNAc-(1-&gt;3)-beta-D-Gal-(1-&gt;4)-beta-D-Glc-(1&lt;-&gt;1')-Cer(d18:1(4E)) + GDP-beta-L-fucose = alpha-L-fucosyl-(1-&gt;2)- beta-D-galactosyl-(1-&gt;3)-N-acetyl-beta-D-glucosaminyl-(1-&gt;3)-beta-D-galactosyl-(1-&gt;4)-beta-D-glucosyl-(1&lt;-&gt;1')-N-acylsphing-4-enine + GDP + H(+). It carries out the reaction a neolactoside nLc4Cer(d18:1(4E)) + GDP-beta-L-fucose = a neolactoside IV(2)-alpha-Fuc-nLc4Cer(d18:1(4E)) + GDP + H(+). It catalyses the reaction a ganglioside GM1 + GDP-beta-L-fucose = a ganglioside Fuc-GM1 + GDP + H(+). The catalysed reaction is beta-D-galactosyl-(1-&gt;3)-N-acetyl-D-galactosamine + GDP-beta-L-fucose = alpha-L-fucosyl-(1-&gt;2)-beta-D-galactosyl-(1-&gt;3)-N-acetyl-D-galactosamine + GDP + H(+). It functions in the pathway protein modification; protein glycosylation. In terms of biological role, catalyzes the transfer of L-fucose, from a guanosine diphosphate-beta-L-fucose, to the terminal galactose residue of glycoconjugates through an alpha(1,2) linkage leading to H antigen synthesis that is an intermediate substrate in the synthesis of ABO blood group antigens. H antigen is essential for maturation of the glomerular layer of the main olfactory bulb, in cell migration and early cell-cell contacts during tumor associated angiogenesis. Preferentially fucosylates soluble lactose and to a lesser extent fucosylates glycolipids gangliosides GA1 and GM1a. This is Galactoside alpha-(1,2)-fucosyltransferase 1 from Pan troglodytes (Chimpanzee).